The sequence spans 32 residues: Delta-conotoxin EVIA (32 aa).

Disulfide bonds link C3/C21, C10/C25, and C20/C29. P6 bears the 4-hydroxyproline mark. L32 is subject to Leucine amide.

Belongs to the conotoxin O1 superfamily. Expressed by the venom duct.

The protein localises to the secreted. In terms of biological role, delta-conotoxins bind to site 6 of voltage-gated sodium channels and inhibit the inactivation process. This toxin inhibits sodium channel inactivation in neuronal membranes from amphibians and mammals (Nav1.2a/SCN1A, Nav1.3/SCN3A and Nav1.6/SCN8A) upon binding to receptor site 6. The sequence is that of Delta-conotoxin EVIA from Conus ermineus (Agate cone).